A 290-amino-acid chain; its full sequence is RIO-type serine/threonine-protein kinase Rio1 (290 aa).

Residues 76-290 (TEYIGIVNSG…PIDEAMIKQL (215 aa)) form the Protein kinase domain. ATP is bound by residues 82-90 (VNSGKEAVV) and Lys-103. The Proton acceptor role is filled by Asp-214. Positions 219 and 231 each coordinate Mg(2+). Catalysis depends on Asp-231, which acts as the 4-aspartylphosphate intermediate.

Belongs to the protein kinase superfamily. RIO-type Ser/Thr kinase family.

It catalyses the reaction L-seryl-[protein] + ATP = O-phospho-L-seryl-[protein] + ADP + H(+). The catalysed reaction is L-threonyl-[protein] + ATP = O-phospho-L-threonyl-[protein] + ADP + H(+). The enzyme catalyses ATP + H2O = ADP + phosphate + H(+). Despite the protein kinase domain is proposed to act predominantly as an ATPase. The sequence is that of RIO-type serine/threonine-protein kinase Rio1 (rio1) from Methanocaldococcus jannaschii (strain ATCC 43067 / DSM 2661 / JAL-1 / JCM 10045 / NBRC 100440) (Methanococcus jannaschii).